We begin with the raw amino-acid sequence, 259 residues long: 4-hydroxy-tetrahydrodipicolinate reductase (259 aa).

NAD(+) is bound by residues 8–13 (GFAGAM), 94–96 (GTT), and 120–123 (APNF). His-150 serves as the catalytic Proton donor/acceptor. His-151 contacts (S)-2,3,4,5-tetrahydrodipicolinate. The active-site Proton donor is the Lys-154. Residue 160 to 161 (GT) participates in (S)-2,3,4,5-tetrahydrodipicolinate binding.

Belongs to the DapB family.

The protein resides in the cytoplasm. It carries out the reaction (S)-2,3,4,5-tetrahydrodipicolinate + NAD(+) + H2O = (2S,4S)-4-hydroxy-2,3,4,5-tetrahydrodipicolinate + NADH + H(+). It catalyses the reaction (S)-2,3,4,5-tetrahydrodipicolinate + NADP(+) + H2O = (2S,4S)-4-hydroxy-2,3,4,5-tetrahydrodipicolinate + NADPH + H(+). Its pathway is amino-acid biosynthesis; L-lysine biosynthesis via DAP pathway; (S)-tetrahydrodipicolinate from L-aspartate: step 4/4. Functionally, catalyzes the conversion of 4-hydroxy-tetrahydrodipicolinate (HTPA) to tetrahydrodipicolinate. In Limosilactobacillus fermentum (strain NBRC 3956 / LMG 18251) (Lactobacillus fermentum), this protein is 4-hydroxy-tetrahydrodipicolinate reductase.